The following is a 294-amino-acid chain: Halotolerance protein HAL1 (294 aa).

Residues 115–153 (LKRGTKEQEDINSSTSKKSAVINNFSGEKTPNPRPQSSN) form a disordered region. The segment covering 125 to 153 (INSSTSKKSAVINNFSGEKTPNPRPQSSN) has biased composition (polar residues). Ser266 is subject to Phosphoserine.

The protein resides in the cytoplasm. In terms of biological role, involved in salt tolerance. This chain is Halotolerance protein HAL1 (HAL1), found in Saccharomyces cerevisiae (strain ATCC 204508 / S288c) (Baker's yeast).